Consider the following 168-residue polypeptide: Small ribosomal subunit protein uS8 (168 aa).

The not found in other S8 sequences stretch occupies residues 59-93 (EEFKKMKELAEKSPNPKMRRYLQQLIDYNKGTQYP).

This sequence belongs to the universal ribosomal protein uS8 family. In terms of assembly, part of the 30S ribosomal subunit. Contacts proteins S5 and S12.

In terms of biological role, one of the primary rRNA binding proteins, it binds directly to 16S rRNA central domain where it helps coordinate assembly of the platform of the 30S subunit. The chain is Small ribosomal subunit protein uS8 from Aquifex pyrophilus.